The sequence spans 172 residues: uncharacterized protein (172 aa).

A signal peptide spans 1–21 (MMKFKKCLLPVAMLASFTLAG). Cysteine 22 carries the N-palmitoyl cysteine lipid modification. Cysteine 22 carries S-diacylglycerol cysteine lipidation.

It is found in the cell membrane. This is an uncharacterized protein from Escherichia coli O157:H7.